We begin with the raw amino-acid sequence, 450 residues long: tRNA modification GTPase MnmE (450 aa).

Residues R23, E79, and K118 each contribute to the (6S)-5-formyl-5,6,7,8-tetrahydrofolate site. One can recognise a TrmE-type G domain in the interval 214-374 (GITLILVGKP…LKEHILNKVG (161 aa)). N224 provides a ligand contact to K(+). GTP-binding positions include 224 to 229 (NAGKSS), 243 to 249 (TSIAGTT), and 268 to 271 (DTAG). S228 contacts Mg(2+). K(+)-binding residues include T243, I245, and T248. T249 is a Mg(2+) binding site. Position 450 (K450) interacts with (6S)-5-formyl-5,6,7,8-tetrahydrofolate.

It belongs to the TRAFAC class TrmE-Era-EngA-EngB-Septin-like GTPase superfamily. TrmE GTPase family. Homodimer. Heterotetramer of two MnmE and two MnmG subunits. K(+) serves as cofactor.

The protein resides in the cytoplasm. Its function is as follows. Exhibits a very high intrinsic GTPase hydrolysis rate. Involved in the addition of a carboxymethylaminomethyl (cmnm) group at the wobble position (U34) of certain tRNAs, forming tRNA-cmnm(5)s(2)U34. The polypeptide is tRNA modification GTPase MnmE (Francisella tularensis subsp. tularensis (strain FSC 198)).